The primary structure comprises 148 residues: UPF0758 protein YeeS (148 aa).

Positions 26 to 148 (AFTSTRAARE…VFSFAEHGLL (123 aa)) constitute an MPN domain. Zn(2+)-binding residues include H97, H99, and D110. The short motif at 97 to 110 (HNHPSGEVTPSKAD) is the JAMM motif element.

Belongs to the UPF0758 family.

The sequence is that of UPF0758 protein YeeS (yeeS) from Escherichia coli (strain K12).